Here is a 119-residue protein sequence, read N- to C-terminus: Insulin growth factor-like family member 2 (119 aa).

An N-terminal signal peptide occupies residues 1-25 (MVPRIFAPAYVSVCLLLLCPREVIA).

The protein belongs to the IGFL family. Detected in cerebellum, heart, placenta, spleen, stomach, testis and thymus.

The protein localises to the secreted. In terms of biological role, potential ligand of the IGFLR1 cell membrane receptor. This is Insulin growth factor-like family member 2 (IGFL2) from Homo sapiens (Human).